A 2065-amino-acid polypeptide reads, in one-letter code: WD repeat-containing protein 81 (2065 aa).

Positions 325–617 constitute a BEACH domain; the sequence is LCRNCQDELK…EPPHFGRVNV (293 aa). 4 disordered regions span residues 1082–1111, 1156–1230, 1271–1290, and 1595–1642; these read EEEE…GGSG, TTVG…VEDR, GEKN…DSEE, and ASPG…GGDI. The segment covering 1101-1111 has biased composition (gly residues); sequence KVGGGSGGGSG. Polar residues predominate over residues 1156 to 1169; that stretch reads TTVGTKQQNQSTAN. Residues 1213–1228 are compositionally biased toward acidic residues; that stretch reads DGEDGGELEDEEETVE. Positions 1624–1637 are enriched in low complexity; sequence SRSPFPAPSSTSTP. 5 WD repeats span residues 1767-1806, 1813-1853, 1906-1945, 1948-1986, and 2035-2065; these read GHSG…DGTR, TYTE…NIRC, LSAG…VLRG, GHEG…PLHQ, and NFRG…RLLA.

Belongs to the WD repeat WDR81 family. Widely expressed.

It localises to the early endosome membrane. It is found in the late endosome membrane. The protein localises to the lysosome membrane. Its subcellular location is the cytoplasmic vesicle. The protein resides in the autophagosome membrane. It localises to the mitochondrion. It is found in the cytoplasm. The protein localises to the cytosol. In terms of biological role, functions as a negative regulator of the PI3 kinase/PI3K activity associated with endosomal membranes. By modifying the phosphatidylinositol 3-phosphate/PtdInsP3 content of endosomal membranes may regulate endosome fusion, recycling, sorting and early to late endosome transport. May also play a role in aggrephagy, the macroautophagic degradation of ubiquitinated protein aggregates. May also be involved in maintenance of normal mitochondrial structure and organization. This is WD repeat-containing protein 81 (wdr81) from Danio rerio (Zebrafish).